Here is a 574-residue protein sequence, read N- to C-terminus: MEDVNQEKKKVPPMSEPERSTPIKTTGGQYRFCKSCVEGSSCRTVRSRTKLMNVLIERGRPHEAQTVFKTLAETGHRPSLISYTTLLAAMTVQKQYGSISSIVSEVEQSGTKLDSIFFNAVINAFSESGNMEDAVQALLKMKELGLNPTTSTYNTLIKGYGIAGKPERSSELLDLMLEEGNVDVGPNIRTFNVLVQAWCKKKKVEEAWEVVKKMEECGVRPDTVTYNTIATCYVQKGETVRAESEVVEKMVMKEKAKPNGRTCGIVVGGYCREGRVRDGLRFVRRMKEMRVEANLVVFNSLINGFVEVMDRDGIDEVLTLMKECNVKADVITYSTVMNAWSSAGYMEKAAQVFKEMVKAGVKPDAHAYSILAKGYVRAKEPKKAEELLETLIVESRPNVVIFTTVISGWCSNGSMDDAMRVFNKMCKFGVSPNIKTFETLMWGYLEVKQPWKAEEVLQMMRGCGVKPENSTFLLLAEAWRVAGLTDESNKAINALKCKDIEIAKLEKLYQKQSSGSSFNLLQIPVGKRELPTAKAMNLSACKLGARVPIICQKQSQAQFGISGQFVHSCTVFLS.

Basic and acidic residues predominate over residues M1–T21. The segment at M1–T25 is disordered. PPR repeat units lie at residues T44–P78, S79–L113, D114–P148, T149–D183, N187–P221, D222–P258, N259–A293, N294–A328, D329–P363, D364–E394, N398–P432, and N433–P467.

Belongs to the PPR family. P subfamily.

This is Pentatricopeptide repeat-containing protein At5g25630 from Arabidopsis thaliana (Mouse-ear cress).